The following is a 109-amino-acid chain: Cell division suppressor protein YneA (109 aa).

The region spanning 39–90 (SEVNVNEGDSLWALADQYAGKSDMAKADFVSWVEKENNLSDGHVEAGDSVVI) is the LysM domain.

This sequence belongs to the YneA family.

It is found in the cytoplasm. In terms of biological role, inhibits cell division during the SOS response. Affects a later stage of the cell division protein assembly, after the assembly of the Z ring, by probably suppressing recruitment of FtsL and/or DivIC to the division machinery. The sequence is that of Cell division suppressor protein YneA from Listeria monocytogenes serovar 1/2a (strain ATCC BAA-679 / EGD-e).